Consider the following 122-residue polypeptide: Large ribosomal subunit protein uL14 (122 aa).

This sequence belongs to the universal ribosomal protein uL14 family. In terms of assembly, part of the 50S ribosomal subunit. Forms a cluster with proteins L3 and L19. In the 70S ribosome, L14 and L19 interact and together make contacts with the 16S rRNA in bridges B5 and B8.

Binds to 23S rRNA. Forms part of two intersubunit bridges in the 70S ribosome. This is Large ribosomal subunit protein uL14 from Mycobacterium sp. (strain KMS).